A 779-amino-acid chain; its full sequence is Lysosome membrane protein 2-A (779 aa).

At 1 to 17 (MVKRGCCHRKMVNHKGC) the chain is on the cytoplasmic side. The helical transmembrane segment at 18–38 (LVSGIFLAVIGAVLFILAFAL) threads the bilayer. Residues 39-732 (LPHLINQTTQ…LLNSQFKLIK (694 aa)) lie on the Lumenal side of the membrane. N-linked (GlcNAc...) asparagine glycosylation is found at Asn44, Asn86, Asn95, Asn114, Asn117, Asn201, Asn239, Asn262, Asn266, Asn277, Asn369, Asn410, Asn440, Asn508, Asn543, Asn601, Asn619, Asn651, and Asn693. Residues 733–753 (ILGFVPVIVVSIIGGIILIAG) form a helical membrane-spanning segment. The Cytoplasmic portion of the chain corresponds to 754-779 (ISMFAFGFKKLRQQKQQGYQAIINNE). Residues 771 to 774 (GYQA) carry the Tyrosine-type lysosomal sorting signal motif.

Belongs to the CD36 family. Heavily glycosylated.

The protein resides in the lysosome membrane. May act as a lysosomal receptor. May be involved in macropinocytosis and fluid phase exocytosis. Binds to the anionic phospholipid phosphoinositol 4,5-bisphosphate, but not to phosphatidylcholine and only weakly to phosphatidylserine. In Dictyostelium discoideum (Social amoeba), this protein is Lysosome membrane protein 2-A (lmpA).